Here is a 136-residue protein sequence, read N- to C-terminus: Histone H2A (136 aa).

Residues 1 to 11 (MTGGKSAGGKA) show a composition bias toward gly residues. The tract at residues 1–23 (MTGGKSAGGKAGTTKNAQSRSSK) is disordered. N6-acetyllysine occurs at positions 5 and 10. Glutamine 107 carries the post-translational modification N5-methylglutamine. Serine 133 bears the Phosphoserine mark. The short motif at 133-134 (SQ) is the [ST]-Q motif element.

This sequence belongs to the histone H2A family. The nucleosome is a histone octamer containing two molecules each of H2A, H2B, H3 and H4 assembled in one H3-H4 heterotetramer and two H2A-H2B heterodimers. The octamer wraps approximately 147 bp of DNA. In terms of processing, phosphorylated to form H2AS128ph (gamma-H2A) in response to DNA double-strand breaks (DSBs) generated by exogenous genotoxic agents and by stalled replication forks. Phosphorylation is dependent on the DNA damage checkpoint kinases MEC1/ATR and TEL1/ATM, spreads on either side of a detected DSB site and may mark the surrounding chromatin for recruitment of proteins required for DNA damage signaling and repair. Gamma-H2A is removed from the DNA prior to the strand invasion-primer extension step of the repair process and subsequently dephosphorylated. Dephosphorylation is necessary for efficient recovery from the DNA damage checkpoint. Acetylated by ESA1 to form H2AK4ac and H2AK7ac.

Its subcellular location is the nucleus. It is found in the chromosome. Functionally, core component of nucleosome which plays a central role in DNA double strand break (DSB) repair. Nucleosomes wrap and compact DNA into chromatin, limiting DNA accessibility to the cellular machineries which require DNA as a template. Histones thereby play a central role in transcription regulation, DNA repair, DNA replication and chromosomal stability. DNA accessibility is regulated via a complex set of post-translational modifications of histones, also called histone code, and nucleosome remodeling. The polypeptide is Histone H2A (hta1) (Botryotinia fuckeliana (strain B05.10) (Noble rot fungus)).